The primary structure comprises 377 residues: tRNA-specific 2-thiouridylase MnmA (377 aa).

ATP-binding positions include Ala-18–Ser-25 and Met-44. The active-site Nucleophile is Cys-113. Cys-113 and Cys-210 are joined by a disulfide. Gly-137 is an ATP binding site. Residues Arg-159–Gln-161 form an interaction with tRNA region. Cys-210 acts as the Cysteine persulfide intermediate in catalysis.

The protein belongs to the MnmA/TRMU family.

Its subcellular location is the cytoplasm. It catalyses the reaction S-sulfanyl-L-cysteinyl-[protein] + uridine(34) in tRNA + AH2 + ATP = 2-thiouridine(34) in tRNA + L-cysteinyl-[protein] + A + AMP + diphosphate + H(+). Its function is as follows. Catalyzes the 2-thiolation of uridine at the wobble position (U34) of tRNA, leading to the formation of s(2)U34. In Rhodospirillum rubrum (strain ATCC 11170 / ATH 1.1.1 / DSM 467 / LMG 4362 / NCIMB 8255 / S1), this protein is tRNA-specific 2-thiouridylase MnmA.